A 542-amino-acid polypeptide reads, in one-letter code: Major facilitator superfamily domain-containing protein 6-like (542 aa).

The next 11 helical transmembrane spans lie at 46 to 66 (LGLSAAMIGIIMASKHLLALL), 89 to 109 (LLSSALVVLPLLLFPSAGILV), 198 to 218 (MFFLVLLVTALWEFVAVPLEW), 246 to 266 (VGAAFGSCLVGVLVTNLFCRI), 272 to 292 (FYSYTVLMILTVPASALLPIY), 321 to 341 (VTVILTGMVTSAVSDFLLWLM), 352 to 372 (GICLALAHLSHTGFSPIAGPL), 381 to 401 (WMLVLAVVGLAMQCLYYSFLW), 404 to 424 (WAVMPAQLLAGFSTGALWWSV), 444 to 464 (FEAFSLDMGAALGSLIAGFVV), and 469 to 489 (VNVLFQGASVMLAVWSSALAV).

This sequence belongs to the major facilitator superfamily. MFSD6 family.

It localises to the membrane. This chain is Major facilitator superfamily domain-containing protein 6-like (mfsd6l), found in Danio rerio (Zebrafish).